A 148-amino-acid polypeptide reads, in one-letter code: Large ribosomal subunit protein bL9 (148 aa).

It belongs to the bacterial ribosomal protein bL9 family.

Binds to the 23S rRNA. In Stutzerimonas stutzeri (strain A1501) (Pseudomonas stutzeri), this protein is Large ribosomal subunit protein bL9.